A 319-amino-acid chain; its full sequence is Protein StrN (319 aa).

The protein operates within antibiotic biosynthesis; streptomycin biosynthesis. The polypeptide is Protein StrN (strN) (Streptomyces griseus).